Here is an 89-residue protein sequence, read N- to C-terminus: Small ribosomal subunit protein uS15 (89 aa).

The protein belongs to the universal ribosomal protein uS15 family. In terms of assembly, part of the 30S ribosomal subunit. Forms a bridge to the 50S subunit in the 70S ribosome, contacting the 23S rRNA.

Functionally, one of the primary rRNA binding proteins, it binds directly to 16S rRNA where it helps nucleate assembly of the platform of the 30S subunit by binding and bridging several RNA helices of the 16S rRNA. Its function is as follows. Forms an intersubunit bridge (bridge B4) with the 23S rRNA of the 50S subunit in the ribosome. This Streptococcus suis (strain 98HAH33) protein is Small ribosomal subunit protein uS15.